A 576-amino-acid polypeptide reads, in one-letter code: Arginine--tRNA ligase (576 aa).

The 'HIGH' region signature appears at 122–132 (PNVAKQMHVGH).

The protein belongs to the class-I aminoacyl-tRNA synthetase family. In terms of assembly, monomer.

It localises to the cytoplasm. It catalyses the reaction tRNA(Arg) + L-arginine + ATP = L-arginyl-tRNA(Arg) + AMP + diphosphate. The chain is Arginine--tRNA ligase from Yersinia pseudotuberculosis serotype IB (strain PB1/+).